Reading from the N-terminus, the 384-residue chain is Signal peptide peptidase-like 3 (384 aa).

Over 1–8 (MAEQTYSW) the chain is Lumenal. The chain crosses the membrane as a helical span at residues 9–29 (AYSLVDSSQVSTFLISILLIV). Residues 30–73 (YGSFRSLNMDFENQDKEKDSNSSSGSFNGNSTNNSIQTIDSTQA) are Cytoplasmic-facing. A helical transmembrane segment spans residues 74–94 (LFLPIGASVSLLVMFFFFDSV). Residue Gln-95 is a topological domain, lumenal. A helical transmembrane segment spans residues 96–116 (VVFTICTAVLATIAFAFLLLP). Residues 117–138 (MCQYLTRPCSPQNKISFGCCGR) are Cytoplasmic-facing. A helical transmembrane segment spans residues 139–159 (FTAAELLSFSLSVMLVLIWVL). At 160-164 (TGHWL) the chain is on the lumenal side. A helical transmembrane segment spans residues 165–185 (LMDALAMGLCVAMIAFVRLPS). Residues 186-190 (LKVSC) lie on the Cytoplasmic side of the membrane. The chain crosses the membrane as a helical span at residues 191-211 (LLLSGLLIYDVFWVFFSAYIF). Asp-200 is an active-site residue. Residues 212–262 (NSNVMVKVATQPADNPLDVLSRKLHLGPNVGRDVPRLSLPGKLVFPSSTGS) lie on the Lumenal side of the membrane. Residues 263 to 283 (HFSMLGIGDIVMPGLLLCFVL) form a helical membrane-spanning segment. The active site involves Asp-271. Over 284-311 (RYDNYKKQASGDSCGAPGPANISGRMQK) the chain is Cytoplasmic. A helical transmembrane segment spans residues 312 to 332 (VSYFHCTLIGYFVGLLTATVA). The Lumenal segment spans residues 333-339 (SRIHRAA). The chain crosses the membrane as a helical span at residues 340-360 (QPALLYLVPFTLLPLLTMAYL). The short motif at 341-343 (PAL) is the PAL element. Residues 361–384 (KGDLRRMWSEPFHSKSSSSRFLEV) lie on the Cytoplasmic side of the membrane.

Belongs to the peptidase A22B family. In terms of assembly, monomer. Homodimer. Interacts with STIM1 (via transmembrane region and SOAR/CAD domain); the interaction promotes the binding of STIM1 to ORAI1. In terms of processing, not glycosylated.

It is found in the endoplasmic reticulum membrane. Its subcellular location is the golgi apparatus. The protein resides in the membrane. With respect to regulation, its proteolytic activity is blocked by a signal peptide peptidase (SPP) inhibitor, (ZLL)2-ketone (ZLL) or a gamma-secretase inhibitor, LY411,575. In terms of biological role, intramembrane-cleaving aspartic protease (I-CLiP) that cleaves type II membrane protein substrates in or close to their luminal transmembrane domain boundaries. Acts like a sheddase by mediating the proteolytic release and secretion of active site-containing ectodomains of glycan-modifiying glycosidase and glycosyltransferase enzymes such as MGAT5, B4GAT1 and B4GALT1. Plays a role in the regulation of cellular glycosylation processes. Required to link T-cell antigen receptor (TCR) and calcineurin-NFAT signaling cascades in lymphocytes by promoting the association of STIM1 and ORAI1 during store-operated calcium entry (SOCE) in a protease-independent manner. The sequence is that of Signal peptide peptidase-like 3 from Mus musculus (Mouse).